Reading from the N-terminus, the 125-residue chain is Hydrogenase maturation factor HypA (125 aa).

A Ni(2+)-binding site is contributed by histidine 2. The Zn(2+) site is built by cysteine 73, cysteine 76, cysteine 96, and cysteine 99.

Belongs to the HypA/HybF family.

Involved in the maturation of [NiFe] hydrogenases. Required for nickel insertion into the metal center of the hydrogenase. This is Hydrogenase maturation factor HypA from Methanobrevibacter smithii (strain ATCC 35061 / DSM 861 / OCM 144 / PS).